We begin with the raw amino-acid sequence, 222 residues long: Peptide methionine sulfoxide reductase MsrA (222 aa).

The active site involves C55.

The protein belongs to the MsrA Met sulfoxide reductase family.

It carries out the reaction L-methionyl-[protein] + [thioredoxin]-disulfide + H2O = L-methionyl-(S)-S-oxide-[protein] + [thioredoxin]-dithiol. It catalyses the reaction [thioredoxin]-disulfide + L-methionine + H2O = L-methionine (S)-S-oxide + [thioredoxin]-dithiol. Has an important function as a repair enzyme for proteins that have been inactivated by oxidation. Catalyzes the reversible oxidation-reduction of methionine sulfoxide in proteins to methionine. The polypeptide is Peptide methionine sulfoxide reductase MsrA (Streptomyces griseus subsp. griseus (strain JCM 4626 / CBS 651.72 / NBRC 13350 / KCC S-0626 / ISP 5235)).